Reading from the N-terminus, the 678-residue chain is Serine/threonine-protein kinase mph1 (678 aa).

Disordered stretches follow at residues 39–93 (KNDT…NSAL) and 114–209 (LPST…SNSV). Composition is skewed to polar residues over residues 41 to 66 (DTFS…SSGA) and 114 to 125 (LPSTNASHSEVS). One can recognise a Protein kinase domain in the interval 316 to 607 (FIKLGVVGKG…LVHPFLNPLP (292 aa)). Residues 322–330 (VGKGGSSMV) and Lys-345 each bind ATP. Catalysis depends on Asp-442, which acts as the Proton acceptor.

It belongs to the protein kinase superfamily. Ser/Thr protein kinase family.

The enzyme catalyses L-seryl-[protein] + ATP = O-phospho-L-seryl-[protein] + ADP + H(+). It catalyses the reaction L-threonyl-[protein] + ATP = O-phospho-L-threonyl-[protein] + ADP + H(+). It carries out the reaction L-tyrosyl-[protein] + ATP = O-phospho-L-tyrosyl-[protein] + ADP + H(+). Functionally, involved in mitotic spindle assembly checkpoint signaling, a process that delays anaphase until chromosomes are bioriented on the spindle, and in the repair of incorrect mitotic kinetochore-spindle microtubule attachments. Phosphorylates spc7/knl1 on MELT motifs; phosphorylation is required for recruitment of the BUB1-BUB3 complex to kinetochores. The chain is Serine/threonine-protein kinase mph1 from Schizosaccharomyces pombe (strain 972 / ATCC 24843) (Fission yeast).